The primary structure comprises 282 residues: ATP phosphoribosyltransferase (282 aa).

It belongs to the ATP phosphoribosyltransferase family. Long subfamily. Mg(2+) serves as cofactor.

Its subcellular location is the cytoplasm. The catalysed reaction is 1-(5-phospho-beta-D-ribosyl)-ATP + diphosphate = 5-phospho-alpha-D-ribose 1-diphosphate + ATP. It functions in the pathway amino-acid biosynthesis; L-histidine biosynthesis; L-histidine from 5-phospho-alpha-D-ribose 1-diphosphate: step 1/9. Feedback inhibited by histidine. Catalyzes the condensation of ATP and 5-phosphoribose 1-diphosphate to form N'-(5'-phosphoribosyl)-ATP (PR-ATP). Has a crucial role in the pathway because the rate of histidine biosynthesis seems to be controlled primarily by regulation of HisG enzymatic activity. The chain is ATP phosphoribosyltransferase from Halobacterium salinarum (strain ATCC 29341 / DSM 671 / R1).